A 319-amino-acid polypeptide reads, in one-letter code: 3-oxoacyl-[acyl-carrier-protein] reductase, chloroplastic (319 aa).

A chloroplast-targeting transit peptide spans 1-57 (MAAAVAAPRLISLKAVAKLGFREISQIRQLAPLHSAIPHFGMLRCRSRQPFSTSVVK). Ala58 is subject to N-acetylalanine. 81 to 105 (ITGASRGIGKAIALALGKAGCKVLV) is an NADP(+) binding site. Position 213 (Ser213) interacts with substrate. Tyr226 acts as the Proton acceptor in catalysis.

The protein belongs to the short-chain dehydrogenases/reductases (SDR) family. Homotetramer.

It localises to the plastid. The protein localises to the chloroplast. It carries out the reaction a (3R)-hydroxyacyl-[ACP] + NADP(+) = a 3-oxoacyl-[ACP] + NADPH + H(+). It participates in lipid metabolism; fatty acid biosynthesis. The polypeptide is 3-oxoacyl-[acyl-carrier-protein] reductase, chloroplastic (Arabidopsis thaliana (Mouse-ear cress)).